The primary structure comprises 231 residues: Putative cobalt transport protein CbiM 1 (231 aa).

6 helical membrane passes run 8–28 (LPLQWCLFWFAVSAPFIAYGI), 41–61 (TLPLLAVCGAFIFVLSSLKMP), 74–94 (GLGAIMFGPFITSVLSIIVLV), 97–117 (ALFLAHGGLTTLGANVFSMGI), 138–158 (IVNVFLASALADIFTYVITSI), and 175–195 (FITFAGIFAVTQVPLAIIEGI).

The protein belongs to the CbiM family. Forms an energy-coupling factor (ECF) transporter complex composed of an ATP-binding protein (A component, CbiO), a transmembrane protein (T component, CbiQ) and 2 possible substrate-capture proteins (S components, CbiM and CbiN) of unknown stoichimetry.

The protein localises to the cell membrane. It functions in the pathway cofactor biosynthesis; adenosylcobalamin biosynthesis. Part of the energy-coupling factor (ECF) transporter complex CbiMNOQ involved in cobalt import. This Methanosphaerula palustris (strain ATCC BAA-1556 / DSM 19958 / E1-9c) protein is Putative cobalt transport protein CbiM 1.